Here is a 233-residue protein sequence, read N- to C-terminus: Probable cyclic nucleotide phosphodiesterase COSY_0614 (233 aa).

Residues aspartate 10, histidine 12, aspartate 48, asparagine 78, histidine 144, histidine 183, and histidine 185 each contribute to the Fe cation site. Residues histidine 12, aspartate 48, and 78 to 79 contribute to the AMP site; that span reads NH. Histidine 185 contacts AMP.

It belongs to the cyclic nucleotide phosphodiesterase class-III family. The cofactor is Fe(2+).

In Vesicomyosocius okutanii subsp. Calyptogena okutanii (strain HA), this protein is Probable cyclic nucleotide phosphodiesterase COSY_0614.